Consider the following 368-residue polypeptide: DNA replication and repair protein RecF (368 aa).

30–37 (GDNGAGKT) contacts ATP.

It belongs to the RecF family.

The protein resides in the cytoplasm. Functionally, the RecF protein is involved in DNA metabolism; it is required for DNA replication and normal SOS inducibility. RecF binds preferentially to single-stranded, linear DNA. It also seems to bind ATP. This chain is DNA replication and repair protein RecF, found in Xanthomonas oryzae pv. oryzae (strain KACC10331 / KXO85).